The sequence spans 429 residues: Glutamate-1-semialdehyde 2,1-aminomutase 2 (429 aa).

At K268 the chain carries N6-(pyridoxal phosphate)lysine.

Belongs to the class-III pyridoxal-phosphate-dependent aminotransferase family. HemL subfamily. As to quaternary structure, homodimer. Pyridoxal 5'-phosphate is required as a cofactor.

It is found in the cytoplasm. It carries out the reaction (S)-4-amino-5-oxopentanoate = 5-aminolevulinate. It participates in porphyrin-containing compound metabolism; protoporphyrin-IX biosynthesis; 5-aminolevulinate from L-glutamyl-tRNA(Glu): step 2/2. This is Glutamate-1-semialdehyde 2,1-aminomutase 2 from Bacillus cereus (strain AH187).